We begin with the raw amino-acid sequence, 281 residues long: uncharacterized protein (281 aa).

The tract at residues 11–30 (PLGHKKEKPPPVSPPSPPPI) is disordered. Over residues 20–30 (PPVSPPSPPPI) the composition is skewed to pro residues. 7 helical membrane passes run 58–78 (TVVF…LIPW), 88–107 (TLPF…AYWL), 117–137 (MLVM…GLCF), 145–165 (AYVL…LMAW), 171–191 (LAIL…IAVQ), 196–216 (YQRI…IVLI), and 248–268 (VIMF…PNYA).

The protein belongs to the cytomegalovirus US12 family.

Its subcellular location is the membrane. This is an uncharacterized protein from Human cytomegalovirus (strain AD169) (HHV-5).